An 834-amino-acid chain; its full sequence is ABC transporter A family member 11 (834 aa).

Helical transmembrane passes span 35–55 (FFILGILLPMISIGASIILNN), 188–208 (MPMILQYGFVFFIPYFAILIV), 235–255 (VFDYLIFLIPTIIGWILLYSF), 269–289 (FLLFLTFGISAIPFGFVLQFI), 297–319 (NKWLYPFTSIVTSIPSALISVAF), 324–346 (PLIVELLLSILPTFSFCNGLKAL), and 355–375 (SYTILIQLLSGLIYLILIYFI). The 242-residue stretch at 452 to 693 (LDKPSIIERC…YGSGYTIDII (242 aa)) folds into the ABC transporter domain. 495–502 (GPNGSGKS) lines the ATP pocket. The span at 779–789 (KQQTNNKSNII) shows a compositional bias: polar residues. Residues 779–834 (KQQTNNKSNIINNNNNNNNNNNNNNNNNNNNNNNNNNNNNNNNNTNNNTNNNQLIN) form a disordered region. Residues 790-834 (NNNNNNNNNNNNNNNNNNNNNNNNNNNNNNNNNTNNNTNNNQLIN) show a composition bias toward low complexity.

Belongs to the ABC transporter superfamily. ABCA family.

The protein localises to the membrane. This chain is ABC transporter A family member 11 (abcA11), found in Dictyostelium discoideum (Social amoeba).